Consider the following 662-residue polypeptide: Transcription activator of gluconeogenesis NECHADRAFT_59099 (662 aa).

Positions 1–61 (MPHEMEENGA…KDPLRPRRKK (61 aa)) are disordered. 2 stretches are compositionally biased toward basic and acidic residues: residues 25-34 (TFLKDDEKMT) and 43-56 (TEVKKKYDPKDPLR). The zn(2)-C6 fungal-type DNA-binding region spans 66–94 (CFACQRAHLTCGDERPCQRCIKRGLADAC). Disordered stretches follow at residues 105 to 149 (LHDA…TGSN), 502 to 524 (YSGRSTNGTNTPDHNSQGEMTTP), and 580 to 606 (YRAPQDPDQKEPGSQKDAQPGILSSRV). Composition is skewed to polar residues over residues 121–130 (YNPTPTPSRT) and 137–149 (SSQSDNLSATGSN). The 72-residue stretch at 448 to 519 (TLVEYDDFLQ…TNTPDHNSQG (72 aa)) folds into the PAS domain. Basic and acidic residues predominate over residues 582–593 (APQDPDQKEPGS).

It belongs to the ERT1/acuK family.

It localises to the nucleus. In terms of biological role, transcription factor which regulates nonfermentable carbon utilization. Activator of gluconeogenetic genes. This Fusarium vanettenii (strain ATCC MYA-4622 / CBS 123669 / FGSC 9596 / NRRL 45880 / 77-13-4) (Fusarium solani subsp. pisi) protein is Transcription activator of gluconeogenesis NECHADRAFT_59099.